Reading from the N-terminus, the 426-residue chain is 26S proteasome regulatory subunit 7 (426 aa).

209-216 (GPPGTGKT) is an ATP binding site.

The protein belongs to the AAA ATPase family.

Its subcellular location is the cytoplasm. It localises to the nucleus. The 26S proteasome is involved in the ATP-dependent degradation of ubiquitinated proteins. The regulatory (or ATPase) complex confers ATP dependency and substrate specificity to the 26S complex. The protein is 26S proteasome regulatory subunit 7 (RPT1) of Spinacia oleracea (Spinach).